Reading from the N-terminus, the 341-residue chain is tRNA uridine(34) hydroxylase (341 aa).

A Rhodanese domain is found at 139 to 233 (SDPEVVLVDT…YLEEVPSTET (95 aa)). Cys-193 serves as the catalytic Cysteine persulfide intermediate. 2 stretches are compositionally biased toward basic and acidic residues: residues 306–316 (SLAEERGESHI) and 324–341 (IEERRQEKNDKKAKQANK). Residues 306–341 (SLAEERGESHIGGDIQNIIEERRQEKNDKKAKQANK) form a disordered region.

This sequence belongs to the TrhO family.

It catalyses the reaction uridine(34) in tRNA + AH2 + O2 = 5-hydroxyuridine(34) in tRNA + A + H2O. In terms of biological role, catalyzes oxygen-dependent 5-hydroxyuridine (ho5U) modification at position 34 in tRNAs. In Colwellia psychrerythraea (strain 34H / ATCC BAA-681) (Vibrio psychroerythus), this protein is tRNA uridine(34) hydroxylase.